Consider the following 207-residue polypeptide: Ribosomal RNA small subunit methyltransferase G (207 aa).

Residues G74, L79, 125–126 (VE), and R140 contribute to the S-adenosyl-L-methionine site.

The protein belongs to the methyltransferase superfamily. RNA methyltransferase RsmG family.

The protein resides in the cytoplasm. It carries out the reaction guanosine(527) in 16S rRNA + S-adenosyl-L-methionine = N(7)-methylguanosine(527) in 16S rRNA + S-adenosyl-L-homocysteine. Its function is as follows. Specifically methylates the N7 position of guanine in position 527 of 16S rRNA. This chain is Ribosomal RNA small subunit methyltransferase G, found in Shewanella piezotolerans (strain WP3 / JCM 13877).